A 284-amino-acid chain; its full sequence is L-ribulose-5-phosphate 3-epimerase UlaE (284 aa).

Belongs to the L-ribulose-5-phosphate 3-epimerase family.

It catalyses the reaction L-ribulose 5-phosphate = L-xylulose 5-phosphate. It functions in the pathway cofactor degradation; L-ascorbate degradation; D-xylulose 5-phosphate from L-ascorbate: step 3/4. Its function is as follows. Catalyzes the isomerization of L-xylulose-5-phosphate to L-ribulose-5-phosphate. Is involved in the anaerobic L-ascorbate utilization. The polypeptide is L-ribulose-5-phosphate 3-epimerase UlaE (Shigella flexneri).